Consider the following 622-residue polypeptide: MSTDNKQSLSAITLAAIGVVYGDIGTSPLYTLRECLSGQFGFGVERDAVFGFLSLIFWLLIFVVSIKYLTFVMRADNAGEGGILTLMSLAGRNTSARMTSTLVIMGLIGGSFFYGEVVITPAISVMSAIEGLEIVAPELDTWVVPLSIIVLTLLFMIQKHGTGMVGKLFAPIMLTWFLILAGLGLRSIIANPDVLHALNPMWAAKFFLEYKTVSFIALGAVVLSITGVEALYADMGHFGKLPIRLAWFSVVLPSLTLNYFGQGALLLKHPEAIKNPFFLLAPEWALIPLLILAALATVIASQAVISGVFSLTRQAVRLGYLSPMRIIHTSEMESGQIYIPFVNWMLYFAVVIVIVSFERSSNLAAAYGIAVTGTMVLTSILSTTVARKNWHWNKYFVALILVAFLCVDVPLFSANLDKLLSGGWLPLTLGIVMFIIMTTWKSERFRLLRRMHEHGNSLEALIASLEKSPPVRVPGTAVYMSRALNVIPFALLHNLKHNKVLHERVILLTLRTEDAPYVHNVRRVQIEQLSPTFWRVVASYGWRETPNVEEVFHRCGLEGLSCRMMETSFFMSHESLILGKRPWYLRLRGKLYLLLQRNALRAPDQFEIPPNRVIELGTQVEI.

12 helical membrane-spanning segments follow: residues 9 to 29 (LSAI…TSPL), 49 to 69 (VFGF…IKYL), 103 to 123 (VIMG…TPAI), 137 to 157 (PELD…LFMI), 165 to 185 (VGKL…GLGL), 213 to 233 (VSFI…ALYA), 247 to 267 (WFSV…ALLL), 276 to 296 (PFFL…AALA), 337 to 357 (IYIP…IVSF), 363 to 383 (LAAA…ILST), 396 to 416 (FVAL…SANL), and 419 to 439 (LLSG…IMTT).

This sequence belongs to the HAK/KUP transporter (TC 2.A.72) family.

The protein localises to the cell inner membrane. The enzyme catalyses K(+)(in) + H(+)(in) = K(+)(out) + H(+)(out). Its function is as follows. Responsible for the low-affinity transport of potassium into the cell. Likely operates as a K(+):H(+) symporter. The protein is Low affinity potassium transport system protein Kup of Citrobacter koseri (strain ATCC BAA-895 / CDC 4225-83 / SGSC4696).